The sequence spans 170 residues: uncharacterized protein (170 aa).

A helical membrane pass occupies residues 96–116; the sequence is FSAISIGSFPIVLFLSLFFFD.

Its subcellular location is the membrane. This is an uncharacterized protein from Borreliella burgdorferi (strain ATCC 35210 / DSM 4680 / CIP 102532 / B31) (Borrelia burgdorferi).